Here is a 595-residue protein sequence, read N- to C-terminus: MEAYKEKIKEKLSVVPFEPGCYLMKDRNNQVIYVGKAKRLRNRLRSYFTGAHDAKTTRLVGEIRNFEFIVTDSETESLLLELNLIKQYQPRYNILLKDDKSYPFIKITKEKYPRLLVTRTVKKGSGKYFGPYPNAYAAVETKKLLDRIYPFRKCDKMPNKLCLYYHIGQCLGPCVYDVDQKEYDDMTQEVSDFLNGEDKTIIKNLESRMQAASENLEFEQAKEYRDLIQNIHNLTKKQNIMSADNTARDVFGYYISKGWMCIQVFFVRNGNMIQRDTTMIPLQQTPEEEFYTFIGQFYRLNQHLLPKEVHVPKNLDKKMIESVVDTKILQPVRGQKKDLVNMANHNAEVSLQNKFELIARDESRTVKAIEELGEQMGIQTPIRIEAFDNSNIQGVDAVSAMVTFVDGKPDKKGYRKYKIKTVEGPDDYKSMQEVIRRRYTRVLNDGLPLPDLIIVDGGKGQMSVAIDVLENELGLDIPVAGLRKNDKHRTSELLYGPAAEVVPLKKNSQAFYLLQRIQDEVHRFAITFHRKTRQKHSFTSALDEIEGIGPKRKTTLLRTFGSIKKMREATLEDLKEAGLPEKVAESLQKELNKED.

Residues 17 to 94 (FEPGCYLMKD…IKQYQPRYNI (78 aa)) enclose the GIY-YIG domain. In terms of domain architecture, UVR spans 199 to 234 (KTIIKNLESRMQAASENLEFEQAKEYRDLIQNIHNL).

The protein belongs to the UvrC family. As to quaternary structure, interacts with UvrB in an incision complex.

Its subcellular location is the cytoplasm. In terms of biological role, the UvrABC repair system catalyzes the recognition and processing of DNA lesions. UvrC both incises the 5' and 3' sides of the lesion. The N-terminal half is responsible for the 3' incision and the C-terminal half is responsible for the 5' incision. This Staphylococcus carnosus (strain TM300) protein is UvrABC system protein C.